We begin with the raw amino-acid sequence, 488 residues long: Metalloreductase STEAP3 (488 aa).

At 1 to 207 the chain is on the cytoplasmic side; it reads MSGEMDKPLI…AREVEAIPLR (207 aa). Phosphoserine occurs at positions 11, 17, and 20. Residues 36 to 39, 58 to 59, 91 to 98, N116, and A151 each bind NADP(+); these read SGDF, SR, and VFREHYSS. 2 residues coordinate FAD: W152 and D160. Residues 208–228 form a helical membrane-spanning segment; it reads LLPSWKVPTLLALGLFVCFYA. Fe(3+) is bound at residue Y229. Over 229–258 the chain is Vesicular; sequence YNFIRDVLQPYIRKDENKFYKMPLSVVNTT. N256 carries an N-linked (GlcNAc...) asparagine glycan. Residues 259-279 traverse the membrane as a helical segment; the sequence is LPCVAYVLLSLVYLPGVLAAA. Residues 259-407 enclose the Ferric oxidoreductase domain; sequence LPCVAYVLLS…LGFVALMLST (149 aa). At 280–304 the chain is on the cytoplasmic side; that stretch reads LQLRRGTKYQRFPDWLDHWLQHRKQ. Q281, R302, and K303 together coordinate FAD. Residues 305-325 traverse the membrane as a helical segment; sequence IGLLSFFFAMLHALYSFCLPL. H316 is a heme b binding site. Y319 is a binding site for Fe(3+). Over 326-358 the chain is Vesicular; sequence RRSHRYDLVNLAVKQVLANKSRLWVEEEVWRME. The helical transmembrane segment at 359–379 threads the bilayer; sequence IYLSLGVLALGMLSLLAVTSI. An FAD-binding site is contributed by S378. Residues 380 to 390 are Cytoplasmic-facing; the sequence is PSIANSLNWKE. The helical transmembrane segment at 391 to 411 threads the bilayer; it reads FSFVQSTLGFVALMLSTMHTL. Q395 contributes to the FAD binding site. A heme b-binding site is contributed by H409. At 412 to 433 the chain is on the vesicular side; it reads TYGWTRAFEENHYKFYLPPTFT. Residues 434–454 traverse the membrane as a helical segment; sequence LTLLLPCVIILAKGLFLLPCL. The Cytoplasmic portion of the chain corresponds to 455 to 488; sequence SHRLTKIRRGWERDGAVKFMLPAGHTQGEKTSHV. At S486 the chain carries Phosphoserine.

Belongs to the STEAP family. Homodimer. Interacts with BNIP3L, MYT1, RHBDL4/RHBDD1 and TCTP. FAD is required as a cofactor. The cofactor is heme b. Post-translationally, proteolytically cleaved by RHBDL4/RHBDD1. RHBDL4/RHBDD1-induced cleavage occurs at multiple sites in a glycosylation-independent manner. Glycosylated.

It localises to the endosome membrane. The enzyme catalyses 2 Fe(2+) + NADP(+) + H(+) = 2 Fe(3+) + NADPH. It carries out the reaction 2 Cu(+) + NADP(+) + H(+) = 2 Cu(2+) + NADPH. Integral membrane protein that functions as a NADPH-dependent ferric-chelate reductase, using NADPH from one side of the membrane to reduce a Fe(3+) chelate that is bound on the other side of the membrane. Mediates sequential transmembrane electron transfer from NADPH to FAD and onto heme, and finally to the Fe(3+) chelate. Can also reduce Cu(2+) to Cu(1+). Mediates efficient transferrin-dependent iron uptake in erythroid cells. May play a role downstream of p53/TP53 to interface apoptosis and cell cycle progression. Indirectly involved in exosome secretion by facilitating the secretion of proteins such as TCTP. This Rattus norvegicus (Rat) protein is Metalloreductase STEAP3 (Steap3).